The primary structure comprises 112 residues: Peptidyl-tRNA hydrolase (112 aa).

This sequence belongs to the PTH2 family.

Its subcellular location is the cytoplasm. It carries out the reaction an N-acyl-L-alpha-aminoacyl-tRNA + H2O = an N-acyl-L-amino acid + a tRNA + H(+). Functionally, the natural substrate for this enzyme may be peptidyl-tRNAs which drop off the ribosome during protein synthesis. The polypeptide is Peptidyl-tRNA hydrolase (Haloquadratum walsbyi (strain DSM 16790 / HBSQ001)).